The primary structure comprises 478 residues: MARKTLRARRFFSLIFPFFFITSVYAEQTPVSAKTVTVEAKNETFAPQHPDQYQSWKATSEQSAREDALAEDPRLVILWAGYPFSRDYNKPRGHAYAVTDVRETLRTGAPKTAEDGPLPMACWSCKSPDVALLIQQEGEDGYFHGKWARGGPEIVNDLGCADCHNTASDDFAQGKPALTLSRPYAERAMEAISKPFDKAGRFDQQSMVCGQCHVEYYFDGKNKAVKFPWDEGMKVENMEQYYDAIAFSDWTNSLSKTPMLKAQHPEYETWSAGIHGKNNVTCIDCHMPKVQNAEGKLYTDHKIGNPFDNFAQTCANCHTQDKASLQKVVAERKQAIHDLKIKVEDQLVHAHFEAKAAWDAGATDAEMKPILNDIRHAQWRWDLAIASHGIHMHAPEEGLRMLGSAMDKAADARTKLARLLATKGITHEIPLPDISTKEKAQKAIGLNMQQINAEKQDFLKTVVPQWEDQARKNSLLSQ.

Residues 1–26 (MARKTLRARRFFSLIFPFFFITSVYA) form the signal peptide. His-94 contributes to the heme c binding site. Heme contacts are provided by Cys-122, Cys-125, and Lys-126. 6 residues coordinate heme c: Cys-160, Cys-163, His-164, Cys-209, Cys-212, and His-213. Glu-215, Tyr-216, Lys-261, and Gln-263 together coordinate Ca(2+). Tyr-216 lines the substrate pocket. A substrate-binding site is contributed by His-264. Residues His-275, Cys-282, Cys-285, His-286, His-301, Cys-314, Cys-317, His-318, and His-393 each coordinate heme c.

It belongs to the cytochrome c-552 family. Ca(2+) serves as cofactor. The cofactor is heme c.

It is found in the periplasm. The catalysed reaction is 6 Fe(III)-[cytochrome c] + NH4(+) + 2 H2O = 6 Fe(II)-[cytochrome c] + nitrite + 8 H(+). Its pathway is nitrogen metabolism; nitrate reduction (assimilation). Functionally, catalyzes the reduction of nitrite to ammonia, consuming six electrons in the process. The polypeptide is Cytochrome c-552 (Salmonella paratyphi A (strain ATCC 9150 / SARB42)).